A 59-amino-acid chain; its full sequence is UPF0181 protein CKO_01169 (59 aa).

It belongs to the UPF0181 family.

The sequence is that of UPF0181 protein CKO_01169 from Citrobacter koseri (strain ATCC BAA-895 / CDC 4225-83 / SGSC4696).